Here is a 354-residue protein sequence, read N- to C-terminus: Serum paraoxonase/arylesterase 2 (354 aa).

Residues Cys-42 and Cys-352 are joined by a disulfide bond. Positions 53 and 54 each coordinate Ca(2+). The active-site Proton acceptor is His-114. Ile-116, Asn-167, Asp-168, and Asn-223 together coordinate Ca(2+). Asn-254 carries N-linked (GlcNAc...) asparagine glycosylation. 2 residues coordinate Ca(2+): Asp-268 and Asn-269. N-linked (GlcNAc...) asparagine glycans are attached at residues Asn-269 and Asn-323.

This sequence belongs to the paraoxonase family. Homotrimer. The cofactor is Ca(2+). In terms of processing, glycosylated. The signal sequence is not cleaved.

The protein resides in the membrane. It carries out the reaction a phenyl acetate + H2O = a phenol + acetate + H(+). The enzyme catalyses an N-acyl-L-homoserine lactone + H2O = an N-acyl-L-homoserine + H(+). In terms of biological role, capable of hydrolyzing lactones and a number of aromatic carboxylic acid esters. The polypeptide is Serum paraoxonase/arylesterase 2 (PON2) (Canis lupus familiaris (Dog)).